A 670-amino-acid polypeptide reads, in one-letter code: UvrABC system protein B (670 aa).

One can recognise a Helicase ATP-binding domain in the interval 51–433 (DGLKKGEPFQ…SSRVVEQIIR (383 aa)). 64–71 (GVTGSGKT) contributes to the ATP binding site. Residues 117–140 (YYDYYQPESYLPAKDQYIEKDAMI) carry the Beta-hairpin motif. The region spanning 453–612 (DVMQEIRKIV…IVPTTIRKPI (160 aa)) is the Helicase C-terminal domain. Residues 631–666 (PNVIIELDAEMREAADRLDFERAIQVRELIKKLEKE) form the UVR domain.

It belongs to the UvrB family. As to quaternary structure, forms a heterotetramer with UvrA during the search for lesions. Interacts with UvrC in an incision complex.

The protein localises to the cytoplasm. In terms of biological role, the UvrABC repair system catalyzes the recognition and processing of DNA lesions. A damage recognition complex composed of 2 UvrA and 2 UvrB subunits scans DNA for abnormalities. Upon binding of the UvrA(2)B(2) complex to a putative damaged site, the DNA wraps around one UvrB monomer. DNA wrap is dependent on ATP binding by UvrB and probably causes local melting of the DNA helix, facilitating insertion of UvrB beta-hairpin between the DNA strands. Then UvrB probes one DNA strand for the presence of a lesion. If a lesion is found the UvrA subunits dissociate and the UvrB-DNA preincision complex is formed. This complex is subsequently bound by UvrC and the second UvrB is released. If no lesion is found, the DNA wraps around the other UvrB subunit that will check the other stand for damage. The polypeptide is UvrABC system protein B (Methanosarcina mazei (strain ATCC BAA-159 / DSM 3647 / Goe1 / Go1 / JCM 11833 / OCM 88) (Methanosarcina frisia)).